Here is a 196-residue protein sequence, read N- to C-terminus: Large ribosomal subunit protein bL25 (196 aa).

It belongs to the bacterial ribosomal protein bL25 family. CTC subfamily. Part of the 50S ribosomal subunit; part of the 5S rRNA/L5/L18/L25 subcomplex. Contacts the 5S rRNA. Binds to the 5S rRNA independently of L5 and L18.

In terms of biological role, this is one of the proteins that binds to the 5S RNA in the ribosome where it forms part of the central protuberance. The polypeptide is Large ribosomal subunit protein bL25 (Amoebophilus asiaticus (strain 5a2)).